We begin with the raw amino-acid sequence, 135 residues long: Phosphoinositide-interacting protein (135 aa).

Residues 1–21 (MEVLPKALEVDERSPESKDLL) are disordered. Over residues 8–19 (LEVDERSPESKD) the composition is skewed to basic and acidic residues. 2 helical membrane passes run 54–74 (IIIM…TCVA) and 92–112 (PAFL…VPII).

As to quaternary structure, interacts with TRPV1. As to expression, strongly expressed in most dorsal root ganglia (DRG) and trigeminal neurons. Expressed by most peptidergic (CGRP+) and non-peptidergic (IB4+) DRG neurons. Weakly expressed in other parts of the peripheral nervous system (PNS) including sympathetic and enteric neurons. Not expressed in the spinal cord.

It localises to the membrane. In terms of biological role, regulatory subunit of TRPV1, a molecular sensor of noxious heat and capsaicin. Positively regulates TRPV1 channel activity via phosphatidylinositol 4,5-bisphosphate (PIP2). Binds various phosphoinositide, including phosphatidylinositol 4,5-bisphosphate (PIP2), but not phosphatidylinositol (PI). The protein is Phosphoinositide-interacting protein (Pirt) of Mus musculus (Mouse).